The following is a 221-amino-acid chain: Orotate phosphoribosyltransferase (221 aa).

Position 26 (K26) interacts with 5-phospho-alpha-D-ribose 1-diphosphate. Residue 34–35 (FF) coordinates orotate. 5-phospho-alpha-D-ribose 1-diphosphate contacts are provided by residues 72 to 73 (YK), R98, K99, K102, H104, and 123 to 131 (DDVISAGTS). S127 and R155 together coordinate orotate.

Belongs to the purine/pyrimidine phosphoribosyltransferase family. PyrE subfamily. In terms of assembly, homodimer. Mg(2+) serves as cofactor.

The catalysed reaction is orotidine 5'-phosphate + diphosphate = orotate + 5-phospho-alpha-D-ribose 1-diphosphate. It functions in the pathway pyrimidine metabolism; UMP biosynthesis via de novo pathway; UMP from orotate: step 1/2. In terms of biological role, catalyzes the transfer of a ribosyl phosphate group from 5-phosphoribose 1-diphosphate to orotate, leading to the formation of orotidine monophosphate (OMP). This chain is Orotate phosphoribosyltransferase, found in Herminiimonas arsenicoxydans.